The sequence spans 131 residues: Peptide methionine sulfoxide reductase MsrB (131 aa).

Residues 8–130 (LEEWKEMLDP…NSVCLDLVPR (123 aa)) form the MsrB domain. Residues cysteine 47, cysteine 50, cysteine 96, and cysteine 99 each contribute to the Zn(2+) site. The Nucleophile role is filled by cysteine 119.

This sequence belongs to the MsrB Met sulfoxide reductase family. The cofactor is Zn(2+).

The catalysed reaction is L-methionyl-[protein] + [thioredoxin]-disulfide + H2O = L-methionyl-(R)-S-oxide-[protein] + [thioredoxin]-dithiol. In Pseudomonas savastanoi pv. phaseolicola (strain 1448A / Race 6) (Pseudomonas syringae pv. phaseolicola (strain 1448A / Race 6)), this protein is Peptide methionine sulfoxide reductase MsrB.